Reading from the N-terminus, the 151-residue chain is Transcriptional regulator MraZ (151 aa).

2 SpoVT-AbrB domains span residues 5 to 52 and 81 to 124; these read ANAV…PLDE and AVDL…DEDA.

The protein belongs to the MraZ family. In terms of assembly, forms oligomers.

The protein resides in the cytoplasm. The protein localises to the nucleoid. This is Transcriptional regulator MraZ from Pseudomonas putida (strain ATCC 700007 / DSM 6899 / JCM 31910 / BCRC 17059 / LMG 24140 / F1).